A 160-amino-acid chain; its full sequence is SsrA-binding protein (160 aa).

The segment at 132 to 160 (KEFDKRDTVRERDSNRELQRTMRNKGKEE) is disordered.

This sequence belongs to the SmpB family.

Its subcellular location is the cytoplasm. Functionally, required for rescue of stalled ribosomes mediated by trans-translation. Binds to transfer-messenger RNA (tmRNA), required for stable association of tmRNA with ribosomes. tmRNA and SmpB together mimic tRNA shape, replacing the anticodon stem-loop with SmpB. tmRNA is encoded by the ssrA gene; the 2 termini fold to resemble tRNA(Ala) and it encodes a 'tag peptide', a short internal open reading frame. During trans-translation Ala-aminoacylated tmRNA acts like a tRNA, entering the A-site of stalled ribosomes, displacing the stalled mRNA. The ribosome then switches to translate the ORF on the tmRNA; the nascent peptide is terminated with the 'tag peptide' encoded by the tmRNA and targeted for degradation. The ribosome is freed to recommence translation, which seems to be the essential function of trans-translation. The polypeptide is SsrA-binding protein (Pseudomonas entomophila (strain L48)).